The sequence spans 346 residues: Hydroxycarboxylic acid receptor 1 (346 aa).

Residues 1-21 (MYNGSCCRIEGDTISQVMPPL) are Extracellular-facing. N-linked (GlcNAc...) asparagine glycosylation is present at Asn-3. Residues 22-42 (LIVAFVLGALGNGVALCGFCF) form a helical membrane-spanning segment. Residues 43–49 (HMKTWKP) are Cytoplasmic-facing. Residues 50-70 (STVYLFNLAVADFLLMICLPF) traverse the membrane as a helical segment. Residues 71 to 89 (RTDYYLRRRHWAFGDIPCR) are Extracellular-facing. Cys-88 and Cys-165 are oxidised to a cystine. Residues 90–110 (VGLFTLAMNRAGSIVFLTVVA) form a helical membrane-spanning segment. The Cytoplasmic segment spans residues 111 to 130 (ADRYFKVVHPHHAVNTISTR). The helical transmembrane segment at 131–151 (VAAGIVCTLWALVILGTVYLL) threads the bilayer. Residues 152 to 182 (LENHLCVQETAVSCESFIMESANGWHDIMFQ) are Extracellular-facing. A helical membrane pass occupies residues 183–203 (LEFFMPLGIILFCSFKIVWSL). Residues 204-220 (RRRQQLARQARMKKATR) are Cytoplasmic-facing. The chain crosses the membrane as a helical span at residues 221 to 241 (FIMVVAIVFITCYLPSVSARL). Topologically, residues 242–261 (YFLWTVPSSACDPSVHGALH) are extracellular. Residues 262–281 (ITLSFTYMNSMLDPLVYYFS) traverse the membrane as a helical segment. The Cytoplasmic segment spans residues 282–346 (SPSFPKFYNK…QWDPHIVEWH (65 aa)).

This sequence belongs to the G-protein coupled receptor 1 family. As to expression, expressed abundantly in brown and white fat. It also detectable at lower levels in liver, kidney, skeletal muscle, brain and pituitary. Not detected in frontal, temporal and occipital lobes of the cortex, basal forebrain, caudate nucleus, nucleus accumbens and hippocampus.

It localises to the cell membrane. Acts as a receptor for L-lactate and mediates its anti-lipolytic effect through a G(i)-protein-mediated pathway. The sequence is that of Hydroxycarboxylic acid receptor 1 (HCAR1) from Homo sapiens (Human).